Reading from the N-terminus, the 512-residue chain is 2,3-bisphosphoglycerate-independent phosphoglycerate mutase (512 aa).

Aspartate 18 and serine 68 together coordinate Mn(2+). The active-site Phosphoserine intermediate is the serine 68. Substrate is bound by residues histidine 129, 159 to 160, arginine 191, arginine 197, 265 to 268, and lysine 338; these read RD and RPDR. Mn(2+) contacts are provided by aspartate 403, histidine 407, aspartate 444, histidine 445, and histidine 462.

Belongs to the BPG-independent phosphoglycerate mutase family. As to quaternary structure, monomer. The cofactor is Mn(2+).

It catalyses the reaction (2R)-2-phosphoglycerate = (2R)-3-phosphoglycerate. The protein operates within carbohydrate degradation; glycolysis; pyruvate from D-glyceraldehyde 3-phosphate: step 3/5. Catalyzes the interconversion of 2-phosphoglycerate and 3-phosphoglycerate. This Mesomycoplasma hyopneumoniae (strain 232) (Mycoplasma hyopneumoniae) protein is 2,3-bisphosphoglycerate-independent phosphoglycerate mutase.